Reading from the N-terminus, the 682-residue chain is Guanylate cyclase soluble subunit beta-2 (682 aa).

Position 43 (His-43) interacts with heme. Residues 408-536 form the Guanylate cyclase domain; sequence TILFSDVVTF…DTVNTASRME (129 aa). The tract at residues 592 to 667 is disordered; sequence MGRPSAPADG…QPSPDETKTS (76 aa). A compositionally biased stretch (polar residues) spans 649 to 667; it reads RNSTDAVNNQPSPDETKTS.

This sequence belongs to the adenylyl cyclase class-4/guanylyl cyclase family. As to quaternary structure, heterodimer of an alpha and a beta chain. The cofactor is heme. Kidney and liver.

It is found in the cytoplasm. The catalysed reaction is GTP = 3',5'-cyclic GMP + diphosphate. With respect to regulation, activated by nitric oxide in the presence of magnesium or manganese ions. In Rattus norvegicus (Rat), this protein is Guanylate cyclase soluble subunit beta-2 (Gucy1b2).